The sequence spans 163 residues: MATEPMTNYGYEKLCAELKNLKEVERPRIVVEIDIARSHGDLKENAEYHAAREKQAFIEARINELGLMLANAQVIDPASLPHNKVSFGSSVKILNLDTDKEFVYTLVGSMESNPSKGLISVSSPIAKALMGKSEGDEVSITLPNGENEFEILEVFYKDIVFEG.

The stretch at 45–65 forms a coiled coil; that stretch reads NAEYHAAREKQAFIEARINEL.

The protein belongs to the GreA/GreB family.

Necessary for efficient RNA polymerase transcription elongation past template-encoded arresting sites. The arresting sites in DNA have the property of trapping a certain fraction of elongating RNA polymerases that pass through, resulting in locked ternary complexes. Cleavage of the nascent transcript by cleavage factors such as GreA or GreB allows the resumption of elongation from the new 3'terminus. GreA releases sequences of 2 to 3 nucleotides. The chain is Transcription elongation factor GreA from Helicobacter hepaticus (strain ATCC 51449 / 3B1).